The chain runs to 450 residues: DNA primase DnaG (450 aa).

The region spanning 199–273 (DSIIVVEGRA…DVDYVARAPE (75 aa)) is the Toprim domain. Mg(2+) contacts are provided by Glu-205, Asp-247, and Asp-249. Basic and acidic residues predominate over residues 320 to 348 (APSKEVKPAPKHEPKPQPVEQKPREEKII). The interval 320 to 350 (APSKEVKPAPKHEPKPQPVEQKPREEKIIRP) is disordered.

It belongs to the archaeal DnaG primase family. As to quaternary structure, forms a ternary complex with MCM helicase and DNA. Component of the archaeal exosome complex. The cofactor is Mg(2+).

It catalyses the reaction ssDNA + n NTP = ssDNA/pppN(pN)n-1 hybrid + (n-1) diphosphate.. Its function is as follows. RNA polymerase that catalyzes the synthesis of short RNA molecules used as primers for DNA polymerase during DNA replication. Also part of the exosome, which is a complex involved in RNA degradation. Acts as a poly(A)-binding protein that enhances the interaction between heteromeric, adenine-rich transcripts and the exosome. The polypeptide is DNA primase DnaG (Thermococcus gammatolerans (strain DSM 15229 / JCM 11827 / EJ3)).